The chain runs to 287 residues: Myogenin (287 aa).

Residues Ser-77 and Ser-79 each carry the phosphoserine; by CaMK2G modification. Positions 81-132 (DRRRAATLREKRRLKKVNEAFEALKRSTLLNPNQRLPKVEILRSAIQYIERL) constitute a bHLH domain. Position 87 is a phosphothreonine; by CaMK2G (Thr-87).

As to quaternary structure, homodimer and heterodimer with E12; heterodimerization enhances MYOG DNA-binding and transcriptional activities. Interacts with SMARCA4/BRG1/BAF190A. Interacts (via C-terminal region) with SSRP1 and SUPT16H; the interaction is indicative of an interaction with the FACT complex. Interacts with CSRP3. Phosphorylated by CAMK2G on threonine and serine amino acids in a muscle activity-dependent manner. Phosphorylation of Thr-87 impairs both DNA-binding and trans-activation functions in contracting muscles. In terms of tissue distribution, expressed in muscle (at protein level).

Its subcellular location is the nucleus. Functionally, acts as a transcriptional activator that promotes transcription of muscle-specific target genes and plays a role in muscle differentiation, cell cycle exit and muscle atrophy. Essential for the development of functional embryonic skeletal fiber muscle differentiation. However is dispensable for postnatal skeletal muscle growth; phosphorylation by CAMK2G inhibits its transcriptional activity in respons to muscle activity. Required for the recruitment of the FACT complex to muscle-specific promoter regions, thus promoting gene expression initiation. During terminal myoblast differentiation, plays a role as a strong activator of transcription at loci with an open chromatin structure previously initiated by MYOD1. Together with MYF5 and MYOD1, co-occupies muscle-specific gene promoter core regions during myogenesis. Also cooperates with myocyte-specific enhancer factor MEF2D and BRG1-dependent recruitment of SWI/SNF chromatin-remodeling enzymes to alter chromatin structure at myogenic late gene promoters. Facilitates cell cycle exit during terminal muscle differentiation through the up-regulation of miR-20a expression, which in turn represses genes involved in cell cycle progression. Binds to the E-box containing (E1) promoter region of the miR-20a gene. Also plays a role in preventing reversal of muscle cell differentiation. Contributes to the atrophy-related gene expression in adult denervated muscles. Induces fibroblasts to differentiate into myoblasts. The protein is Myogenin (Myog) of Rattus norvegicus (Rat).